Consider the following 404-residue polypeptide: Cysteine desulfurase IscS (404 aa).

Residues 75-76 (AT), asparagine 155, glutamine 183, and 203-205 (SAH) contribute to the pyridoxal 5'-phosphate site. An N6-(pyridoxal phosphate)lysine modification is found at lysine 206. Position 243 (threonine 243) interacts with pyridoxal 5'-phosphate. The active-site Cysteine persulfide intermediate is cysteine 328. A [2Fe-2S] cluster-binding site is contributed by cysteine 328.

Belongs to the class-V pyridoxal-phosphate-dependent aminotransferase family. NifS/IscS subfamily. In terms of assembly, homodimer. Forms a heterotetramer with IscU, interacts with other sulfur acceptors. It depends on pyridoxal 5'-phosphate as a cofactor.

It localises to the cytoplasm. It catalyses the reaction (sulfur carrier)-H + L-cysteine = (sulfur carrier)-SH + L-alanine. Its pathway is cofactor biosynthesis; iron-sulfur cluster biosynthesis. In terms of biological role, master enzyme that delivers sulfur to a number of partners involved in Fe-S cluster assembly, tRNA modification or cofactor biosynthesis. Catalyzes the removal of elemental sulfur atoms from cysteine to produce alanine. Functions as a sulfur delivery protein for Fe-S cluster synthesis onto IscU, an Fe-S scaffold assembly protein, as well as other S acceptor proteins. This Aeromonas hydrophila subsp. hydrophila (strain ATCC 7966 / DSM 30187 / BCRC 13018 / CCUG 14551 / JCM 1027 / KCTC 2358 / NCIMB 9240 / NCTC 8049) protein is Cysteine desulfurase IscS.